The sequence spans 597 residues: MKNIRNFSIIAHIDHGKSTLADRFIQFCGGLELREMSAQVLDSMDIEKERGITIKAQTAALQYKARDGQVYNLNLIDTPGHVDFSYEVSRSLSACEGALLVVDASQGVEAQTVANCYTAIDLGVEVVPVLNKIDLPAADPERISQEIEDIIGIEAVEAVRASAKSGIGIEDILEEVVNKIPPPKGDPDGPLKALIVDSWFDNYVGVVMLVRVIDGSLKPKDKIKFMATGAEHLCEQVGVFTPKSVQRPSLNAGEVGFVIAGIKELKSAKVGDTITLVSKPATEALPGFKDVQSQVFAGLYPVESHDYEALRDALEKLQLNDASLKYEPEVSQALGFGFRCGFLGLLHLEIVQERLEREFDMDLITTAPTVNYEVVMKDGTVEVVSNPSRMPEAGKYDELREPIITSTILVPQDYVGSVMTLCNQKRGVQRNMQYMGRQVMLTYDLPMNEVVMDFFDKLKSTSRGYASLDYEFKEFQSADLVKLDVLVNGEKVDALSLIVHRASSVYRGRELVAKMRELIPRQMFDIAVQAAIGGHIIARETVKALRKNVLAKCYGGDITRKKKLLEKQKAGKKRMKQVGNVEIPQEAFLAILQVGDK.

The region spanning 2–184 is the tr-type G domain; sequence KNIRNFSIIA…EVVNKIPPPK (183 aa). Residues 14-19 and 131-134 each bind GTP; these read DHGKST and NKID.

The protein belongs to the TRAFAC class translation factor GTPase superfamily. Classic translation factor GTPase family. LepA subfamily.

The protein resides in the cell inner membrane. It carries out the reaction GTP + H2O = GDP + phosphate + H(+). Functionally, required for accurate and efficient protein synthesis under certain stress conditions. May act as a fidelity factor of the translation reaction, by catalyzing a one-codon backward translocation of tRNAs on improperly translocated ribosomes. Back-translocation proceeds from a post-translocation (POST) complex to a pre-translocation (PRE) complex, thus giving elongation factor G a second chance to translocate the tRNAs correctly. Binds to ribosomes in a GTP-dependent manner. This Chromobacterium violaceum (strain ATCC 12472 / DSM 30191 / JCM 1249 / CCUG 213 / NBRC 12614 / NCIMB 9131 / NCTC 9757 / MK) protein is Elongation factor 4.